The primary structure comprises 128 residues: Large ribosomal subunit protein bL17 (128 aa).

This sequence belongs to the bacterial ribosomal protein bL17 family. As to quaternary structure, part of the 50S ribosomal subunit. Contacts protein L32.

The sequence is that of Large ribosomal subunit protein bL17 from Pseudomonas syringae pv. tomato (strain ATCC BAA-871 / DC3000).